Consider the following 319-residue polypeptide: Annexin A4 (319 aa).

Position 7 is a phosphothreonine (Thr-7). At Ser-12 the chain carries Phosphoserine. 4 Annexin repeats span residues 14–85 (FNAT…GMMT), 86–157 (PTVL…SLTA), 169–241 (ALVR…AIVK), and 245–316 (NKPA…ILCG). 3 positions are modified to N6-acetyllysine: Lys-213, Lys-293, and Lys-300.

This sequence belongs to the annexin family.

The protein localises to the zymogen granule membrane. Functionally, calcium/phospholipid-binding protein which promotes membrane fusion and is involved in exocytosis. This Rattus norvegicus (Rat) protein is Annexin A4 (Anxa4).